A 431-amino-acid polypeptide reads, in one-letter code: Trigger factor (431 aa).

Positions 164 to 249 (GNIAVIDFKG…IKEIKVKELP (86 aa)) constitute a PPIase FKBP-type domain.

Belongs to the FKBP-type PPIase family. Tig subfamily.

The protein localises to the cytoplasm. It carries out the reaction [protein]-peptidylproline (omega=180) = [protein]-peptidylproline (omega=0). Functionally, involved in protein export. Acts as a chaperone by maintaining the newly synthesized protein in an open conformation. Functions as a peptidyl-prolyl cis-trans isomerase. The protein is Trigger factor of Clostridium tetani (strain Massachusetts / E88).